A 630-amino-acid polypeptide reads, in one-letter code: Membrane protein insertase YidC (630 aa).

Transmembrane regions (helical) follow at residues 10-30 (LMFL…VMGP), 396-416 (MVGN…LILF), 470-490 (VPML…TVTI), 528-548 (LIGA…LYGF), and 571-591 (FFPI…VIYW).

Belongs to the OXA1/ALB3/YidC family. Type 1 subfamily. Interacts with the Sec translocase complex via SecD. Specifically interacts with transmembrane segments of nascent integral membrane proteins during membrane integration.

The protein localises to the cell inner membrane. In terms of biological role, required for the insertion and/or proper folding and/or complex formation of integral membrane proteins into the membrane. Involved in integration of membrane proteins that insert both dependently and independently of the Sec translocase complex, as well as at least some lipoproteins. Aids folding of multispanning membrane proteins. This is Membrane protein insertase YidC from Caulobacter sp. (strain K31).